The primary structure comprises 298 residues: Protease HtpX homolog (298 aa).

The next 2 membrane-spanning stretches (helical) occupy residues 14 to 34 and 39 to 59; these read ILVM…IGYL and VIGG…VIIG. His144 contributes to the Zn(2+) binding site. Glu145 is an active-site residue. His148 is a Zn(2+) binding site. The next 2 helical transmembrane spans lie at 159 to 179 and 195 to 215; these read IALA…NFWW and IFAI…ATIA. Glu224 serves as a coordination point for Zn(2+).

It belongs to the peptidase M48B family. Requires Zn(2+) as cofactor.

The protein localises to the cell membrane. The sequence is that of Protease HtpX homolog from Limosilactobacillus reuteri (strain DSM 20016) (Lactobacillus reuteri).